Consider the following 385-residue polypeptide: MKDVILIANAGSSSLKISIFAIQNKRVNDKIYNIFLEKNNNKILFYINQQKESTTSIKDDPIEMMINLFEEWWKKQSALNLIATGHRIVHGGKNFNKPVVVNKKVIKELRVLIPLSPLHQPYNLQVLDLFFQKYKAISHIICFDTSFHCTNSPITKAFGLPKQYYDKGIMRYGFHGLSYQYVSSHFKEITMEDLPPKAIIAHLGSGSSLCAIKNGLSLTSSMGFSVLDGVMMATRPGNLDPGVVLYLINNEKMTINEITELLYKKSGLLGMSGESSDMRTLIASNSHDSKFAVDLFVYRIVLEIGKLIAALEGIDCLIFTAGVGQNSPVIREMISKKLSWLGIKIDYEKNQKNEHRISTKGSKIKVFVVPTNEELIIAEEVMKFL.

N9 lines the Mg(2+) pocket. K16 serves as a coordination point for ATP. R87 is a binding site for substrate. D144 serves as the catalytic Proton donor/acceptor. Residues 202–206 (HLGSG) and 277–279 (DMR) contribute to the ATP site. A Mg(2+)-binding site is contributed by E373.

This sequence belongs to the acetokinase family. As to quaternary structure, homodimer. Mg(2+) serves as cofactor. It depends on Mn(2+) as a cofactor.

The protein localises to the cytoplasm. The catalysed reaction is acetate + ATP = acetyl phosphate + ADP. The protein operates within metabolic intermediate biosynthesis; acetyl-CoA biosynthesis; acetyl-CoA from acetate: step 1/2. Its function is as follows. Catalyzes the formation of acetyl phosphate from acetate and ATP. Can also catalyze the reverse reaction. The sequence is that of Acetate kinase from Rickettsia prowazekii (strain Madrid E).